The chain runs to 287 residues: Large ribosomal subunit protein uL2 (287 aa).

Composition is skewed to basic residues over residues 209–220 (GRNRWKARRPKV) and 258–287 (KTRKKKKQSNKLIVRRRRRSSKRSRGGRQS). Residues 209-287 (GRNRWKARRP…SKRSRGGRQS (79 aa)) form a disordered region.

The protein belongs to the universal ribosomal protein uL2 family. Part of the 50S ribosomal subunit. Forms a bridge to the 30S subunit in the 70S ribosome.

Its function is as follows. One of the primary rRNA binding proteins. Required for association of the 30S and 50S subunits to form the 70S ribosome, for tRNA binding and peptide bond formation. It has been suggested to have peptidyltransferase activity; this is somewhat controversial. Makes several contacts with the 16S rRNA in the 70S ribosome. In Acaryochloris marina (strain MBIC 11017), this protein is Large ribosomal subunit protein uL2.